The following is a 429-amino-acid chain: Serine hydroxymethyltransferase (429 aa).

(6S)-5,6,7,8-tetrahydrofolate is bound by residues Leu-128 and 132–134 (GHL). The residue at position 237 (Lys-237) is an N6-(pyridoxal phosphate)lysine.

The protein belongs to the SHMT family. In terms of assembly, homodimer. It depends on pyridoxal 5'-phosphate as a cofactor.

The protein localises to the cytoplasm. The catalysed reaction is (6R)-5,10-methylene-5,6,7,8-tetrahydrofolate + glycine + H2O = (6S)-5,6,7,8-tetrahydrofolate + L-serine. It participates in one-carbon metabolism; tetrahydrofolate interconversion. The protein operates within amino-acid biosynthesis; glycine biosynthesis; glycine from L-serine: step 1/1. Catalyzes the reversible interconversion of serine and glycine with tetrahydrofolate (THF) serving as the one-carbon carrier. This reaction serves as the major source of one-carbon groups required for the biosynthesis of purines, thymidylate, methionine, and other important biomolecules. Also exhibits THF-independent aldolase activity toward beta-hydroxyamino acids, producing glycine and aldehydes, via a retro-aldol mechanism. This Caulobacter vibrioides (strain ATCC 19089 / CIP 103742 / CB 15) (Caulobacter crescentus) protein is Serine hydroxymethyltransferase.